The chain runs to 117 residues: Hainantoxin-XV-5 (117 aa).

The first 20 residues, 1–20, serve as a signal peptide directing secretion; the sequence is MKLCAVIIASLLVCVAVASS. Residues 20–55 are disordered; the sequence is SSDNQKEFAQEKEMTREETQSLGEHEKDDEVTGSEE. The propeptide occupies 21–56; sequence SDNQKEFAQEKEMTREETQSLGEHEKDDEVTGSEER. A compositionally biased stretch (basic and acidic residues) spans 23-55; that stretch reads NQKEFAQEKEMTREETQSLGEHEKDDEVTGSEE. Intrachain disulfides connect cysteine 58–cysteine 72, cysteine 65–cysteine 78, cysteine 69–cysteine 115, and cysteine 71–cysteine 91.

Belongs to the neurotoxin 03 (Tx2) family. 02 subfamily. HNTX-XV sub-subfamily. In terms of tissue distribution, expressed by the venom gland.

The protein resides in the secreted. Its function is as follows. Putative ion channel inhibitor. The chain is Hainantoxin-XV-5 from Cyriopagopus hainanus (Chinese bird spider).